We begin with the raw amino-acid sequence, 122 residues long: Large ribosomal subunit protein uL14 (122 aa).

This sequence belongs to the universal ribosomal protein uL14 family. In terms of assembly, part of the 50S ribosomal subunit. Forms a cluster with proteins L3 and L19. In the 70S ribosome, L14 and L19 interact and together make contacts with the 16S rRNA in bridges B5 and B8.

Binds to 23S rRNA. Forms part of two intersubunit bridges in the 70S ribosome. The polypeptide is Large ribosomal subunit protein uL14 (Buchnera aphidicola subsp. Schizaphis graminum (strain Sg)).